The sequence spans 556 residues: Formate--tetrahydrofolate ligase 1 (556 aa).

ATP is bound at residue 65 to 72; the sequence is TPAGEGKT.

It belongs to the formate--tetrahydrofolate ligase family.

It catalyses the reaction (6S)-5,6,7,8-tetrahydrofolate + formate + ATP = (6R)-10-formyltetrahydrofolate + ADP + phosphate. It participates in one-carbon metabolism; tetrahydrofolate interconversion. The protein is Formate--tetrahydrofolate ligase 1 of Desulfitobacterium hafniense (strain Y51).